We begin with the raw amino-acid sequence, 155 residues long: Egg-lysin (155 aa).

The first 18 residues, 1-18, serve as a signal peptide directing secretion; that stretch reads MKLLVLCLFAMMATLAVS.

Monomer. Homodimer. Molecules associate into dimers and then rapidly dissociate again. Interacts (as a monomer) with the egg vitelline layer protein VERL (via VERL repeats); each VERL chain can bind multiple copies of lysin. As to expression, sperm (at protein level).

Its subcellular location is the cytoplasmic vesicle. The protein resides in the secretory vesicle. It localises to the acrosome lumen. Creates a 3 um hole in the egg vitelline layer through which the sperm passes. Does not have enzyme activity. Species-specific interaction between the sperm protein lysin and the egg protein VERL exposes a basic surface on lysin that may dissociate the egg vitelline layer via electrostatic repulsion. Plays a role in ensuring species-specific fertilization. The polypeptide is Egg-lysin (Haliotis corrugata (Pink abalone)).